A 187-amino-acid chain; its full sequence is UPF0301 protein YE3428 (187 aa).

Belongs to the UPF0301 (AlgH) family.

This chain is UPF0301 protein YE3428, found in Yersinia enterocolitica serotype O:8 / biotype 1B (strain NCTC 13174 / 8081).